Reading from the N-terminus, the 942-residue chain is DDB1- and CUL4-associated factor 5 (942 aa).

WD repeat units follow at residues 51–91 (GHFG…HSRV), 99–139 (EHHS…LDVF), 140–180 (AHED…HGEP), 185–225 (NYPS…SSLL), 277–317 (FNSC…EAGG), and 331–370 (GHRS…GCTG). 2 disordered regions span residues 449 to 478 (GVSE…ESAD) and 490 to 509 (TTNT…AASR). Over residues 454–465 (SGYTDSESSASL) the composition is skewed to polar residues. Thr-500 carries the phosphothreonine modification. Residues Ser-531, Ser-533, Ser-626, Ser-628, Ser-645, Ser-648, and Ser-651 each carry the phosphoserine modification. 3 disordered regions span residues 544–655 (TDLF…DIES), 676–824 (NNKD…EERS), and 889–942 (ACET…KLKT). Residues 625–641 (LSSSPTSSPERSTSTLE) are compositionally biased toward low complexity. 2 stretches are compositionally biased toward basic and acidic residues: residues 690 to 701 (DEGRAGTSHKDN) and 728 to 738 (CSKDTFKEETP). Residues 760–770 (GTSQDTGNSGS) are compositionally biased toward polar residues. At Ser-794 the chain carries Phosphoserine. Over residues 801–815 (SGSTLNSGSGNCPRT) the composition is skewed to polar residues.

Interacts with DDB1, CUL4A or CUL4B. Interacts with L3MBTL3. Interacts with DNMT1. Interacts with E2F1. Interacts with SOX2. Ubiquitous.

It participates in protein modification; protein ubiquitination. In terms of biological role, is a substrate receptor for the CUL4-DDB1 E3 ubiquitin-protein ligase complex (CRL4). The complex CRL4-DCAF5 is involved in the ubiquitination of a set of methylated non-histone proteins, including SOX2, DNMT1 and E2F1. The protein is DDB1- and CUL4-associated factor 5 (DCAF5) of Homo sapiens (Human).